We begin with the raw amino-acid sequence, 85 residues long: MKVAVVVALLCFVCYTAAETCSADGDCKNTICDASHDLECHRGQCTCVNHATACSSAADCSGSCTIFGRHGRWHCVDAKCRCFFV.

Positions 1–18 (MKVAVVVALLCFVCYTAA) are cleaved as a signal peptide.

Contains 6 disulfide bonds. As to expression, detected in hemolymph (at protein level). Within the digestive gland expression is limited to the basophil cells of the digestive diverticula.

The protein resides in the secreted. In terms of biological role, slow-binding inhibitor of serine proteases. The inhibitor rapidly binds to the protease forming a weak enzyme-inhibitor complex, and this is followed by a slow isomerization forming a tight-binding enzyme-inhibitor complex. Active against subtilisin A with a dissociation constant of 0.18 nM. Active against perkinsin. Not active against thermolysin, papain or pepsin. The polypeptide is Serine protease inhibitor Cvsi-2 (Crassostrea virginica (Eastern oyster)).